We begin with the raw amino-acid sequence, 436 residues long: UPF0597 protein YhaM (436 aa).

The protein belongs to the UPF0597 family.

This chain is UPF0597 protein YhaM, found in Escherichia coli O139:H28 (strain E24377A / ETEC).